The following is a 466-amino-acid chain: 3-isopropylmalate dehydratase large subunit (466 aa).

[4Fe-4S] cluster-binding residues include Cys347, Cys407, and Cys410.

This sequence belongs to the aconitase/IPM isomerase family. LeuC type 1 subfamily. As to quaternary structure, heterodimer of LeuC and LeuD. It depends on [4Fe-4S] cluster as a cofactor.

It carries out the reaction (2R,3S)-3-isopropylmalate = (2S)-2-isopropylmalate. It participates in amino-acid biosynthesis; L-leucine biosynthesis; L-leucine from 3-methyl-2-oxobutanoate: step 2/4. Catalyzes the isomerization between 2-isopropylmalate and 3-isopropylmalate, via the formation of 2-isopropylmaleate. This chain is 3-isopropylmalate dehydratase large subunit, found in Blochmanniella floridana.